The sequence spans 161 residues: Probable calcium-binding protein CML16 (161 aa).

4 EF-hand domains span residues 8 to 43 (DQIKQLKDIFARFDMDKDGSLTQLELAALLRSLGIK), 44 to 79 (PRGDQISLLLNQIDRNGNGSVEFDELVVAILPDINE), 83 to 118 (INQEQLMEVFRSFDRDGNGSITAAELAGSMAKMGHP), and 119 to 154 (LTYRELTEMMTEADSNGDGVISFNEFSHIMAKSAAD). 19 residues coordinate Ca(2+): Asp-21, Asp-23, Asp-25, Ser-27, Glu-32, Asp-57, Asn-59, Asn-61, Ser-63, Glu-68, Asp-96, Asp-98, Asn-100, Ser-102, Glu-107, Asp-132, Asn-134, Asp-136, and Glu-143.

Functionally, potential calcium sensor. In Arabidopsis thaliana (Mouse-ear cress), this protein is Probable calcium-binding protein CML16 (CML16).